A 397-amino-acid chain; its full sequence is Phosphoglycerate kinase (397 aa).

Substrate-binding positions include 25–27, R41, 64–67, R118, and R151; these read DLN and HLGR. ATP-binding positions include K202, E324, and 350–353; that span reads GGDT.

It belongs to the phosphoglycerate kinase family. In terms of assembly, monomer.

The protein localises to the cytoplasm. The enzyme catalyses (2R)-3-phosphoglycerate + ATP = (2R)-3-phospho-glyceroyl phosphate + ADP. The protein operates within carbohydrate degradation; glycolysis; pyruvate from D-glyceraldehyde 3-phosphate: step 2/5. This chain is Phosphoglycerate kinase, found in Paracidovorax citrulli (strain AAC00-1) (Acidovorax citrulli).